Here is a 98-residue protein sequence, read N- to C-terminus: NADH-ubiquinone oxidoreductase chain 4L (98 aa).

3 helical membrane passes run 2–22 (PSIS…MLMF), 29–49 (SLLC…LIIL), and 61–81 (ILLL…LVMI).

It belongs to the complex I subunit 4L family. Core subunit of respiratory chain NADH dehydrogenase (Complex I) which is composed of 45 different subunits.

It is found in the mitochondrion inner membrane. It catalyses the reaction a ubiquinone + NADH + 5 H(+)(in) = a ubiquinol + NAD(+) + 4 H(+)(out). Core subunit of the mitochondrial membrane respiratory chain NADH dehydrogenase (Complex I) which catalyzes electron transfer from NADH through the respiratory chain, using ubiquinone as an electron acceptor. Part of the enzyme membrane arm which is embedded in the lipid bilayer and involved in proton translocation. The chain is NADH-ubiquinone oxidoreductase chain 4L (MT-ND4L) from Mirza coquereli (Coquerel's giant mouse lemur).